Reading from the N-terminus, the 520-residue chain is MAMVSSCRLCLRTDSLYLAIEQSAAQANSLPRSSCSVVPRRTQIICPQLQVLPNALKSLQPGHGLKRLKEGNVFAVRASTTTDTDVNVDADAVAPGKFIPASPIVLSKGPWEQIPGGVTAAKGFRAAGMYAQLRAAGKKPDLALIVCDTDAVSAGTFTKNVVAAAPVIYCKKTLADSSTARAILINAGQANAATGDAGYQDTLECVAAVAKHCGVPEGAVLIESTGVIGRRIKKDALIEAVPKLVGSLSASVASADAAAVAITTTDLVSKSVAIETKIGGTTVRLGGIAKGSGMIHPNMATMLGVVTCDVDVTAEVWRPMVITAVNRSFNQITVDGDSSTNDTLLALASGAAGGPKISDINSEEARQLQAALDAVLQGLAKSIASDGEGATCLVEVTVTGASDEAAAATVARSVAASSLTKAAIYGRDPNWGRIACATGYAGVPFDPLCLQIYLGDFHLMEKGQPLEFDSNGASAYLKKAGEVHGTVSINICIGHGPGQSQAWGCDLSYDYVKINAEYTT.

Substrate contacts are provided by Thr264, Lys290, Thr301, Glu388, Asn515, and Thr520. Residue Thr301 is the Nucleophile of the active site.

It belongs to the ArgJ family. Heterodimer of an alpha and a beta chain.

The protein resides in the plastid. The protein localises to the chloroplast. The catalysed reaction is N(2)-acetyl-L-ornithine + L-glutamate = N-acetyl-L-glutamate + L-ornithine. It catalyses the reaction L-glutamate + acetyl-CoA = N-acetyl-L-glutamate + CoA + H(+). Its pathway is amino-acid biosynthesis; L-arginine biosynthesis; L-ornithine and N-acetyl-L-glutamate from L-glutamate and N(2)-acetyl-L-ornithine (cyclic): step 1/1. It participates in amino-acid biosynthesis; L-arginine biosynthesis; N(2)-acetyl-L-ornithine from L-glutamate: step 1/4. Functionally, catalyzes two activities which are involved in the cyclic version of arginine biosynthesis: the synthesis of acetylglutamate from glutamate and acetyl-CoA, and of ornithine by transacetylation between acetylornithine and glutamate. This is Arginine biosynthesis bifunctional protein ArgJ, chloroplastic from Physcomitrium patens (Spreading-leaved earth moss).